Consider the following 148-residue polypeptide: Deoxyuridine 5'-triphosphate nucleotidohydrolase (148 aa).

Residues Arg68–Gly70, Asn81, Thr85–Asp87, and Lys95 each bind substrate.

This sequence belongs to the dUTPase family. It depends on Mg(2+) as a cofactor.

It catalyses the reaction dUTP + H2O = dUMP + diphosphate + H(+). Its pathway is pyrimidine metabolism; dUMP biosynthesis; dUMP from dCTP (dUTP route): step 2/2. In terms of biological role, this enzyme is involved in nucleotide metabolism: it produces dUMP, the immediate precursor of thymidine nucleotides and it decreases the intracellular concentration of dUTP so that uracil cannot be incorporated into DNA. The polypeptide is Deoxyuridine 5'-triphosphate nucleotidohydrolase (Rickettsia prowazekii (strain Madrid E)).